We begin with the raw amino-acid sequence, 138 residues long: Ribosomal RNA large subunit methyltransferase H (138 aa).

S-adenosyl-L-methionine-binding positions include Gly-86 and 105-110; that span reads LSPLTF.

It belongs to the RNA methyltransferase RlmH family. In terms of assembly, homodimer.

It localises to the cytoplasm. It carries out the reaction pseudouridine(1915) in 23S rRNA + S-adenosyl-L-methionine = N(3)-methylpseudouridine(1915) in 23S rRNA + S-adenosyl-L-homocysteine + H(+). Functionally, specifically methylates the pseudouridine at position 1915 (m3Psi1915) in 23S rRNA. The sequence is that of Ribosomal RNA large subunit methyltransferase H from Prochlorococcus marinus (strain MIT 9215).